The chain runs to 204 residues: Dephospho-CoA kinase (204 aa).

Positions 4-201 (VIGLTGGIAS…EKYLAMCKKN (198 aa)) constitute a DPCK domain. 12 to 17 (ASGKTT) is an ATP binding site.

Belongs to the CoaE family.

It localises to the cytoplasm. The catalysed reaction is 3'-dephospho-CoA + ATP = ADP + CoA + H(+). The protein operates within cofactor biosynthesis; coenzyme A biosynthesis; CoA from (R)-pantothenate: step 5/5. Its function is as follows. Catalyzes the phosphorylation of the 3'-hydroxyl group of dephosphocoenzyme A to form coenzyme A. The chain is Dephospho-CoA kinase from Vibrio parahaemolyticus serotype O3:K6 (strain RIMD 2210633).